The chain runs to 387 residues: 3-ketoacyl-CoA thiolase (387 aa).

Residue Cys91 is the Acyl-thioester intermediate of the active site. Catalysis depends on proton acceptor residues His343 and Cys373.

Belongs to the thiolase-like superfamily. Thiolase family. Heterotetramer of two alpha chains (FadB) and two beta chains (FadA).

Its subcellular location is the cytoplasm. The catalysed reaction is an acyl-CoA + acetyl-CoA = a 3-oxoacyl-CoA + CoA. It functions in the pathway lipid metabolism; fatty acid beta-oxidation. Catalyzes the final step of fatty acid oxidation in which acetyl-CoA is released and the CoA ester of a fatty acid two carbons shorter is formed. The chain is 3-ketoacyl-CoA thiolase from Aliivibrio salmonicida (strain LFI1238) (Vibrio salmonicida (strain LFI1238)).